The chain runs to 359 residues: DNA polymerase IV (359 aa).

The 181-residue stretch at 4–184 folds into the UmuC domain; the sequence is IVHVDMDAFY…LKVNRIPGVG (181 aa). The Mg(2+) site is built by Asp8 and Asp102. Residue Glu103 is part of the active site.

The protein belongs to the DNA polymerase type-Y family. In terms of assembly, monomer. Mg(2+) serves as cofactor.

The protein localises to the cytoplasm. The enzyme catalyses DNA(n) + a 2'-deoxyribonucleoside 5'-triphosphate = DNA(n+1) + diphosphate. In terms of biological role, poorly processive, error-prone DNA polymerase involved in untargeted mutagenesis. Copies undamaged DNA at stalled replication forks, which arise in vivo from mismatched or misaligned primer ends. These misaligned primers can be extended by PolIV. Exhibits no 3'-5' exonuclease (proofreading) activity. May be involved in translesional synthesis, in conjunction with the beta clamp from PolIII. The protein is DNA polymerase IV of Xanthomonas euvesicatoria pv. vesicatoria (strain 85-10) (Xanthomonas campestris pv. vesicatoria).